A 459-amino-acid polypeptide reads, in one-letter code: Cysteine--tRNA ligase (459 aa).

Cysteine 31 is a binding site for Zn(2+). Positions 33-43 match the 'HIGH' region motif; that stretch reads PTVYYNPHIGN. Positions 216, 241, and 245 each coordinate Zn(2+). Positions 274–278 match the 'KMSKS' region motif; that stretch reads KMSKS. ATP is bound at residue lysine 277.

Belongs to the class-I aminoacyl-tRNA synthetase family. In terms of assembly, monomer. Zn(2+) serves as cofactor.

The protein resides in the cytoplasm. It carries out the reaction tRNA(Cys) + L-cysteine + ATP = L-cysteinyl-tRNA(Cys) + AMP + diphosphate. The protein is Cysteine--tRNA ligase of Rickettsia africae (strain ESF-5).